Consider the following 164-residue polypeptide: Peptide deformylase-like (164 aa).

E134 is a catalytic residue.

Belongs to the polypeptide deformylase family.

The protein is Peptide deformylase-like of Brucella melitensis biotype 1 (strain ATCC 23456 / CCUG 17765 / NCTC 10094 / 16M).